Here is a 79-residue protein sequence, read N- to C-terminus: Conotoxin VnMEKL-024 (79 aa).

The N-terminal stretch at 1–19 is a signal peptide; that stretch reads MQKLTILLLVAAVLMSTQA. Residues 20 to 50 constitute a propeptide that is removed on maturation; the sequence is LIRGGVEKRQEAKRNFFSKRKTTAESWWEGE. 3 disulfide bridges follow: Cys51–Cys65, Cys58–Cys69, and Cys64–Cys76.

Belongs to the conotoxin O2 superfamily. As to expression, expressed by the venom duct.

The protein localises to the secreted. This Conus ventricosus (Mediterranean cone) protein is Conotoxin VnMEKL-024.